Reading from the N-terminus, the 605-residue chain is Capsid scaffolding protein (605 aa).

Active-site charge relay system residues include histidine 48, serine 116, and histidine 139. The segment at 235-275 (ASDAPDLQKPDKALQSPPPASTDPDTMLSGNAGEGATACGG) is disordered. Positions 281–300 (QDLISVPRNTFMTLLQTNLD) are interaction with pAP. Disordered stretches follow at residues 403 to 432 (DYVP…PGED) and 489 to 588 (PHQS…KSVS). The Nuclear localization signal motif lies at 410–416 (RSNKRKR). The span at 568–579 (ASASGVAQSKEP) shows a compositional bias: polar residues. The interval 585–605 (KSVSAHLKSIFCEELLNKRVA) is interaction with major capsid protein.

It belongs to the herpesviridae capsid scaffolding protein family. As to quaternary structure, homomultimer. Interacts with major capsid protein. In terms of assembly, exists in a monomer-dimer equilibrium with the dimer being the active species. Post-translationally, capsid scaffolding protein is cleaved by assemblin after formation of the spherical procapsid. As a result, the capsid obtains its mature, icosahedral shape. Cleavages occur at two or more sites: release (R-site) and maturation (M-site).

Its subcellular location is the host cytoplasm. It localises to the host nucleus. The enzyme catalyses Cleaves -Ala-|-Ser- and -Ala-|-Ala- bonds in the scaffold protein.. Acts as a scaffold protein by binding major capsid protein in the cytoplasm, inducing the nuclear localization of both proteins. Multimerizes in the nucleus such as major capsid protein forms the icosahedral T=16 capsid. Autocatalytic cleavage releases the assembly protein, and subsequently abolishes interaction with major capsid protein. Cleavages products are evicted from the capsid before or during DNA packaging. In terms of biological role, protease that plays an essential role in virion assembly within the nucleus. Catalyzes the cleavage of the assembly protein after formation of the spherical procapsid. By that cleavage, the capsid matures and gains its icosahedral shape. The cleavage sites seem to include -Ala-Ser-, -Ala-Ala-, as well as Ala-Thr bonds. Assemblin and cleavages products are evicted from the capsid before or during DNA packaging. Its function is as follows. Plays a major role in capsid assembly. Acts as a scaffold protein by binding major capsid protein. Multimerizes in the nucleus such as major capsid protein forms the icosahedral T=16 capsid. Cleaved by assemblin after capsid completion. The cleavages products are evicted from the capsid before or during DNA packaging. This chain is Capsid scaffolding protein, found in Epstein-Barr virus (strain AG876) (HHV-4).